A 470-amino-acid polypeptide reads, in one-letter code: Crh-like protein UTR2 (470 aa).

A signal peptide spans 1–23 (MRFSTLHFAFLATLSSIFTVVAA). Cys-58 and Cys-69 are oxidised to a cystine. N-linked (GlcNAc...) asparagine glycosylation is found at Asn-65, Asn-100, and Asn-125. The region spanning 95–282 (SDYLGNSTEA…WAGGLINWDS (188 aa)) is the GH16 domain. Catalysis depends on Glu-168, which acts as the Nucleophile. Glu-172 functions as the Proton donor in the catalytic mechanism. Position 172 (Glu-172) interacts with chitin. Residues Asn-177, Asn-194, Asn-198, Asn-202, Asn-235, and Asn-239 are each glycosylated (N-linked (GlcNAc...) asparagine). Residues Trp-259 and Thr-270 each contribute to the chitin site. Residues Asn-314 and Asn-327 are each glycosylated (N-linked (GlcNAc...) asparagine). Residues 347 to 446 (SDDATGFDPQ…SSGSSSQGVA (100 aa)) are disordered. 2 stretches are compositionally biased toward low complexity: residues 370–384 (TTIT…ITSV) and 392–408 (TANV…QATA). The segment covering 409–418 (KSSTGTNTYD) has biased composition (polar residues). Low complexity predominate over residues 433–446 (TDSGSSGSSSQGVA). Ser-440 is lipidated: GPI-anchor amidated serine. Residues 441–470 (SSQGVANSLNESVISGIFASICLGILSFFM) constitute a propeptide, removed in mature form. Residue Asn-450 is glycosylated (N-linked (GlcNAc...) asparagine).

This sequence belongs to the glycosyl hydrolase 16 family. CRH1 subfamily. The GPI-anchor is attached to the protein in the endoplasmic reticulum and serves to target the protein to the cell surface. There, the glucosamine-inositol phospholipid moiety is cleaved off and the GPI-modified mannoprotein is covalently attached via its lipidless GPI glycan remnant to the 1,6-beta-glucan of the outer cell wall layer.

The protein resides in the secreted. Its subcellular location is the cell wall. It is found in the membrane. It catalyses the reaction Random endo-hydrolysis of N-acetyl-beta-D-glucosaminide (1-&gt;4)-beta-linkages in chitin and chitodextrins.. In terms of biological role, dual chitinase/transglycosylase that plays a role in cell wall architecture. Chitinase and transglycosylase activities are coupled. Required for the polysaccharide cross-linking at the septa and the cell wall. More specifically, transfers chitin to 1,6-beta-glucan in the cell wall. Plays an important role in fungal pathogenesis via its functions in cell wall assembly and regeneration, filamentation, and adherence to host cells. Acts as a cell surface antigen in acute candidemia patients. In Candida albicans (strain SC5314 / ATCC MYA-2876) (Yeast), this protein is Crh-like protein UTR2.